A 436-amino-acid polypeptide reads, in one-letter code: Trigger factor (436 aa).

The 86-residue stretch at 163-248 (GDRVTVDFEG…VKKIEAAHLP (86 aa)) folds into the PPIase FKBP-type domain.

The protein belongs to the FKBP-type PPIase family. Tig subfamily.

It localises to the cytoplasm. It carries out the reaction [protein]-peptidylproline (omega=180) = [protein]-peptidylproline (omega=0). Its function is as follows. Involved in protein export. Acts as a chaperone by maintaining the newly synthesized protein in an open conformation. Functions as a peptidyl-prolyl cis-trans isomerase. The protein is Trigger factor of Acidovorax ebreus (strain TPSY) (Diaphorobacter sp. (strain TPSY)).